The following is a 337-amino-acid chain: MANIHRPRRGSLAYSPRKRAKSQVPKYHSWPARDGEPILQSFAGYKVGMTHVIMVDDHKNSPTEGKDIMVPVTIIEIPPMKVAAIRAYTADTYGKRALTEVWTEQLSTLLGRRITLPKKYSEEAGFKALSEAVAAGTVTELHALMYTQPDTLTGVPKKVPELMEVCIGGGTLEQKVEFAQSIIGNEVNLADVIGAGEYADVTAITTGKGTQGPVKRWGIMLRKRKHSRGGKKRHIGNLGPWNPHHVRWQVPQMGQMGYQQRTDFNKRILKIGENGTDITPAGGFLHYGLLRNPYVMIKGSVPGPVKRLIRIRPAVRKGEHHARVPAIEFVSTQSKQG.

This sequence belongs to the universal ribosomal protein uL3 family. In terms of assembly, part of the 50S ribosomal subunit. Forms a cluster with proteins L14 and L24e.

Its function is as follows. One of the primary rRNA binding proteins, it binds directly near the 3'-end of the 23S rRNA, where it nucleates assembly of the 50S subunit. The protein is Large ribosomal subunit protein uL3 of Methanosphaerula palustris (strain ATCC BAA-1556 / DSM 19958 / E1-9c).